The following is a 194-amino-acid chain: Phosphoheptose isomerase (194 aa).

An SIS domain is found at 37 to 194; it reads IAKSFKNKNK…IIEKEMKKIN (158 aa). 52 to 54 lines the substrate pocket; sequence NGG. Zn(2+)-binding residues include His61 and Glu65. Substrate-binding positions include Glu65, 93–94, 119–121, Ser124, and Gln172; these read ND and STS. Residues Gln172 and His180 each contribute to the Zn(2+) site.

It belongs to the SIS family. GmhA subfamily. As to quaternary structure, homotetramer. Zn(2+) is required as a cofactor.

The protein localises to the cytoplasm. The catalysed reaction is 2 D-sedoheptulose 7-phosphate = D-glycero-alpha-D-manno-heptose 7-phosphate + D-glycero-beta-D-manno-heptose 7-phosphate. It functions in the pathway carbohydrate biosynthesis; D-glycero-D-manno-heptose 7-phosphate biosynthesis; D-glycero-alpha-D-manno-heptose 7-phosphate and D-glycero-beta-D-manno-heptose 7-phosphate from sedoheptulose 7-phosphate: step 1/1. In terms of biological role, catalyzes the isomerization of sedoheptulose 7-phosphate in D-glycero-D-manno-heptose 7-phosphate. The chain is Phosphoheptose isomerase from Buchnera aphidicola subsp. Schizaphis graminum (strain Sg).